The sequence spans 320 residues: NAD kinase (320 aa).

Asp96 functions as the Proton acceptor in the catalytic mechanism. NAD(+)-binding positions include 96-97, Arg101, 170-171, Asp200, and 211-216; these read DG, NE, and TAYAFS.

It belongs to the NAD kinase family. It depends on a divalent metal cation as a cofactor.

The protein localises to the cytoplasm. It carries out the reaction NAD(+) + ATP = ADP + NADP(+) + H(+). Its function is as follows. Involved in the regulation of the intracellular balance of NAD and NADP, and is a key enzyme in the biosynthesis of NADP. Catalyzes specifically the phosphorylation on 2'-hydroxyl of the adenosine moiety of NAD to yield NADP. This chain is NAD kinase, found in Rhodococcus opacus (strain B4).